A 473-amino-acid polypeptide reads, in one-letter code: Photosystem II CP43 reaction center protein (473 aa).

Positions Met-1–Glu-14 are excised as a propeptide. Thr-15 carries the post-translational modification N-acetylthreonine. Thr-15 carries the phosphothreonine modification. 5 helical membrane passes run Leu-69–Ala-93, Leu-134–Asn-155, Lys-178–Thr-200, Lys-255–Ser-275, and Trp-291–Ala-312. Glu-367 is a binding site for [CaMn4O5] cluster. Residues Arg-447–Pro-471 form a helical membrane-spanning segment.

It belongs to the PsbB/PsbC family. PsbC subfamily. PSII is composed of 1 copy each of membrane proteins PsbA, PsbB, PsbC, PsbD, PsbE, PsbF, PsbH, PsbI, PsbJ, PsbK, PsbL, PsbM, PsbT, PsbX, PsbY, PsbZ, Psb30/Ycf12, at least 3 peripheral proteins of the oxygen-evolving complex and a large number of cofactors. It forms dimeric complexes. The cofactor is Binds multiple chlorophylls and provides some of the ligands for the Ca-4Mn-5O cluster of the oxygen-evolving complex. It may also provide a ligand for a Cl- that is required for oxygen evolution. PSII binds additional chlorophylls, carotenoids and specific lipids..

Its subcellular location is the plastid. It is found in the chloroplast thylakoid membrane. Its function is as follows. One of the components of the core complex of photosystem II (PSII). It binds chlorophyll and helps catalyze the primary light-induced photochemical processes of PSII. PSII is a light-driven water:plastoquinone oxidoreductase, using light energy to abstract electrons from H(2)O, generating O(2) and a proton gradient subsequently used for ATP formation. This chain is Photosystem II CP43 reaction center protein, found in Fagopyrum esculentum subsp. ancestrale (Wild buckwheat).